The following is a 131-amino-acid chain: Ribonuclease VapC4 (131 aa).

The PINc domain occupies 4–106 (IVPDTNFLIY…IVATNDKELK (103 aa)). Mg(2+) contacts are provided by D7 and D102.

Belongs to the PINc/VapC protein family. The cofactor is Mg(2+).

Toxic component of a type II toxin-antitoxin (TA) system. An RNase. Its cognate antitoxin is VapB4. This is Ribonuclease VapC4 from Methanocaldococcus jannaschii (strain ATCC 43067 / DSM 2661 / JAL-1 / JCM 10045 / NBRC 100440) (Methanococcus jannaschii).